Consider the following 378-residue polypeptide: tRNA-specific 2-thiouridylase MnmA (378 aa).

ATP-binding positions include 27 to 34 and Leu53; that span reads AMSGGVDS. Cys121 serves as the catalytic Nucleophile. The cysteines at positions 121 and 218 are disulfide-linked. Gly145 contributes to the ATP binding site. The interaction with tRNA stretch occupies residues 168 to 170; sequence RDQ. The active-site Cysteine persulfide intermediate is Cys218.

Belongs to the MnmA/TRMU family.

The protein resides in the cytoplasm. It catalyses the reaction S-sulfanyl-L-cysteinyl-[protein] + uridine(34) in tRNA + AH2 + ATP = 2-thiouridine(34) in tRNA + L-cysteinyl-[protein] + A + AMP + diphosphate + H(+). Its function is as follows. Catalyzes the 2-thiolation of uridine at the wobble position (U34) of tRNA, leading to the formation of s(2)U34. This is tRNA-specific 2-thiouridylase MnmA from Rhizorhabdus wittichii (strain DSM 6014 / CCUG 31198 / JCM 15750 / NBRC 105917 / EY 4224 / RW1) (Sphingomonas wittichii).